The sequence spans 302 residues: tRNA dimethylallyltransferase (302 aa).

10-17 (GPTAIGKT) contributes to the ATP binding site. 12–17 (TAIGKT) contacts substrate. An interaction with substrate tRNA region spans residues 35–38 (DSRQ).

The protein belongs to the IPP transferase family. Monomer. It depends on Mg(2+) as a cofactor.

It catalyses the reaction adenosine(37) in tRNA + dimethylallyl diphosphate = N(6)-dimethylallyladenosine(37) in tRNA + diphosphate. In terms of biological role, catalyzes the transfer of a dimethylallyl group onto the adenine at position 37 in tRNAs that read codons beginning with uridine, leading to the formation of N6-(dimethylallyl)adenosine (i(6)A). The sequence is that of tRNA dimethylallyltransferase from Christiangramia forsetii (strain DSM 17595 / CGMCC 1.15422 / KT0803) (Gramella forsetii).